The primary structure comprises 278 residues: Small ribosomal subunit protein uS2 (278 aa).

Disordered regions lie at residues 216–235 and 250–278; these read EAAA…TQWD and NFAA…EWTN. A compositionally biased stretch (low complexity) spans 256-278; it reads ADGNWGATTGGDWAAAGGEEWTN.

This sequence belongs to the universal ribosomal protein uS2 family. In terms of assembly, component of the small ribosomal subunit. Mature ribosomes consist of a small (40S) and a large (60S) subunit. The 40S subunit contains about 33 different proteins and 1 molecule of RNA (18S). The 60S subunit contains about 49 different proteins and 3 molecules of RNA (25S, 5.8S and 5S). Interacts with ribosomal protein S21.

The protein resides in the cytoplasm. Its function is as follows. Required for the assembly and/or stability of the 40S ribosomal subunit. Required for the processing of the 20S rRNA-precursor to mature 18S rRNA in a late step of the maturation of 40S ribosomal subunits. In Monosiga brevicollis (Choanoflagellate), this protein is Small ribosomal subunit protein uS2.